The primary structure comprises 347 residues: Photosystem II protein D1 (347 aa).

Transmembrane regions (helical) follow at residues 31-48 (YIGWFGIFMFPLTGLAII), 120-135 (HFIGGVSSWMGREWEF), and 144-158 (WIYLAFSAPLVAATA). H120 provides a ligand contact to chlorophyll a. Pheophytin a is bound at residue W128. The [CaMn4O5] cluster site is built by D172 and E191. The chain crosses the membrane as a helical span at residues 199-220 (FHILGVAGVFGGSLFSAMHGSL). H200 is a binding site for chlorophyll a. A quinone is bound by residues H217 and 266–267 (SF). Fe cation is bound at residue H217. H274 provides a ligand contact to Fe cation. The helical transmembrane segment at 276–290 (FLAAWPVIGIWFTAL) threads the bilayer. The [CaMn4O5] cluster site is built by H334, E335, and D344.

It belongs to the reaction center PufL/M/PsbA/D family. As to quaternary structure, PSII is composed of 1 copy each of membrane proteins PsbA, PsbB, PsbC, PsbD, PsbE, PsbF, PsbH, PsbI, PsbJ, PsbK, PsbL, PsbM, PsbT, PsbX, PsbY, PsbZ, Psb30/Ycf12, at least 3 peripheral proteins of the oxygen-evolving complex and a large number of cofactors. It forms dimeric complexes. It depends on The D1/D2 heterodimer binds P680, chlorophylls that are the primary electron donor of PSII, and subsequent electron acceptors. It shares a non-heme iron and each subunit binds pheophytin, quinone, additional chlorophylls, carotenoids and lipids. D1 provides most of the ligands for the Mn4-Ca-O5 cluster of the oxygen-evolving complex (OEC). There is also a Cl(-1) ion associated with D1 and D2, which is required for oxygen evolution. The PSII complex binds additional chlorophylls, carotenoids and specific lipids. as a cofactor. Post-translationally, tyr-163 forms a radical intermediate that is referred to as redox-active TyrZ, YZ or Y-Z.

The protein resides in the plastid. Its subcellular location is the chloroplast thylakoid membrane. It catalyses the reaction 2 a plastoquinone + 4 hnu + 2 H2O = 2 a plastoquinol + O2. Photosystem II (PSII) is a light-driven water:plastoquinone oxidoreductase that uses light energy to abstract electrons from H(2)O, generating O(2) and a proton gradient subsequently used for ATP formation. It consists of a core antenna complex that captures photons, and an electron transfer chain that converts photonic excitation into a charge separation. The D1/D2 (PsbA/PsbD) reaction center heterodimer binds P680, the primary electron donor of PSII as well as several subsequent electron acceptors. The sequence is that of Photosystem II protein D1 from Alexandrium tamarense (Red tide dinoflagellate).